The primary structure comprises 510 residues: Sulfoquinovosyl transferase SQD2 (510 aa).

A chloroplast-targeting transit peptide spans 1–83 (MTTLSSINLS…SNDMTITQVR (83 aa)). Ser88 carries the phosphoserine modification. A helical transmembrane segment spans residues 198–218 (PGVMVFGALAIAKMLSVPIVM).

It belongs to the glycosyltransferase group 1 family. Glycosyltransferase 4 subfamily.

It is found in the plastid. The protein localises to the chloroplast membrane. It carries out the reaction UDP-alpha-D-6-sulfoquinovose + a 1,2-diacyl-sn-glycerol = a 6-sulfo-alpha-D-quinovosyldiacylglycerol + UDP + H(+). The protein operates within glycolipid biosynthesis. Functionally, catalyzes the transfer of the sulfoquinovose moiety from UDP-sulfoquinovose to diacylglycerol during sulfolipid biosynthesis. Sulfolipid contributes to maintaining a negatively charged lipid-water interface, a requirement for proper function of photosynthetic membranes. Sulfolipid may also function as a substitute of anionic phospholipids under phosphate-limited growth conditions. The sequence is that of Sulfoquinovosyl transferase SQD2 from Arabidopsis thaliana (Mouse-ear cress).